The following is an 880-amino-acid chain: Valine--tRNA ligase (880 aa).

A 'HIGH' region motif is present at residues 47-57; that stretch reads PNITGKLHLGH. The 'KMSKS' region signature appears at 526–530; sequence KMSKS. Lys-529 is a binding site for ATP. A coiled-coil region spans residues 810–845; the sequence is LLDLVDREKELERLNKEKTKLEGEILRVEKKLSNER.

It belongs to the class-I aminoacyl-tRNA synthetase family. ValS type 1 subfamily. In terms of assembly, monomer.

It is found in the cytoplasm. The enzyme catalyses tRNA(Val) + L-valine + ATP = L-valyl-tRNA(Val) + AMP + diphosphate. Functionally, catalyzes the attachment of valine to tRNA(Val). As ValRS can inadvertently accommodate and process structurally similar amino acids such as threonine, to avoid such errors, it has a 'posttransfer' editing activity that hydrolyzes mischarged Thr-tRNA(Val) in a tRNA-dependent manner. The chain is Valine--tRNA ligase from Clostridium perfringens (strain 13 / Type A).